A 130-amino-acid polypeptide reads, in one-letter code: Protein ApaG (130 aa).

Residues 3 to 127 (STITRDIQIT…FSLDSPFSRQ (125 aa)) enclose the ApaG domain.

This chain is Protein ApaG, found in Beijerinckia indica subsp. indica (strain ATCC 9039 / DSM 1715 / NCIMB 8712).